The primary structure comprises 482 residues: tRNA modification GTPase MnmE (482 aa).

The (6S)-5-formyl-5,6,7,8-tetrahydrofolate site is built by arginine 25, glutamate 82, and lysine 135. One can recognise a TrmE-type G domain in the interval 231–404 (GIKVVIAGQP…LRRVLLDIAG (174 aa)). Asparagine 241 provides a ligand contact to K(+). Residues 241–246 (NAGKSS), 260–266 (TPIAGTT), 285–288 (DTAG), and 385–387 (SAR) contribute to the GTP site. Serine 245 is a binding site for Mg(2+). K(+)-binding residues include threonine 260, isoleucine 262, and threonine 265. Threonine 266 contacts Mg(2+). Lysine 482 contacts (6S)-5-formyl-5,6,7,8-tetrahydrofolate.

The protein belongs to the TRAFAC class TrmE-Era-EngA-EngB-Septin-like GTPase superfamily. TrmE GTPase family. As to quaternary structure, homodimer. Heterotetramer of two MnmE and two MnmG subunits. The cofactor is K(+).

It localises to the cytoplasm. In terms of biological role, exhibits a very high intrinsic GTPase hydrolysis rate. Involved in the addition of a carboxymethylaminomethyl (cmnm) group at the wobble position (U34) of certain tRNAs, forming tRNA-cmnm(5)s(2)U34. This Paracidovorax citrulli (strain AAC00-1) (Acidovorax citrulli) protein is tRNA modification GTPase MnmE.